Here is a 451-residue protein sequence, read N- to C-terminus: ADP-specific phosphofructokinase (451 aa).

An ADPK domain is found at 1–450 (MSVPQDVSIF…FITYVNYLKR (450 aa)). Residues Glu261, Glu291, and Asp434 each contribute to the Mg(2+) site. Asp434 acts as the Proton acceptor in catalysis.

The protein belongs to the carbohydrate kinase PfkC family. The cofactor is Mg(2+).

It localises to the cytoplasm. It carries out the reaction beta-D-fructose 6-phosphate + ADP = beta-D-fructose 1,6-bisphosphate + AMP + H(+). Its pathway is carbohydrate degradation; glycolysis. In terms of biological role, catalyzes the phosphorylation of fructose 6-phosphate to fructose 1,6-bisphosphate using ADP as the phosphate donor. The sequence is that of ADP-specific phosphofructokinase from Pyrococcus abyssi (strain GE5 / Orsay).